The sequence spans 62 residues: Large ribosomal subunit protein eL24 (62 aa).

Zn(2+) is bound by residues cysteine 7, cysteine 10, cysteine 33, and cysteine 37. The C4-type zinc finger occupies 7-37 (CSFCGKDILPGTGLMYVRNDGSLLWFCSSKC).

The protein belongs to the eukaryotic ribosomal protein eL24 family. Part of the 50S ribosomal subunit. Forms a cluster with proteins L3 and L14. Requires Zn(2+) as cofactor.

Functionally, binds to the 23S rRNA. This is Large ribosomal subunit protein eL24 from Sulfolobus acidocaldarius (strain ATCC 33909 / DSM 639 / JCM 8929 / NBRC 15157 / NCIMB 11770).